A 262-amino-acid chain; its full sequence is Tropinone reductase homolog At2g30670 (262 aa).

Residue 13-37 participates in NADP(+) binding; that stretch reads LVTGGASGIGHAIVEELAGLGARIY. Ser-146 serves as a coordination point for substrate. Tyr-159 functions as the Proton acceptor in the catalytic mechanism.

It belongs to the short-chain dehydrogenases/reductases (SDR) family. SDR65C subfamily.

This Arabidopsis thaliana (Mouse-ear cress) protein is Tropinone reductase homolog At2g30670.